The chain runs to 159 residues: Protein-export protein SecB (159 aa).

It belongs to the SecB family. In terms of assembly, homotetramer, a dimer of dimers. One homotetramer interacts with 1 SecA dimer.

It localises to the cytoplasm. Its function is as follows. One of the proteins required for the normal export of preproteins out of the cell cytoplasm. It is a molecular chaperone that binds to a subset of precursor proteins, maintaining them in a translocation-competent state. It also specifically binds to its receptor SecA. The chain is Protein-export protein SecB from Nitrosospira multiformis (strain ATCC 25196 / NCIMB 11849 / C 71).